Here is a 495-residue protein sequence, read N- to C-terminus: Protein-serine O-palmitoleoyltransferase porcupine (495 aa).

Transmembrane regions (helical) follow at residues 46 to 66 (TQYI…VLIV), 92 to 112 (VIDH…AVQW), 184 to 204 (TVLS…GPWI), 232 to 252 (MLIH…FLLT), 358 to 378 (PFGT…LHGL), 403 to 422 (LATI…SCTV), 434 to 454 (VINM…GCIF), and 475 to 495 (TELN…YFVI). The active site involves H376.

It belongs to the membrane-bound acyltransferase family. Porcupine subfamily.

It localises to the endoplasmic reticulum membrane. The catalysed reaction is [Wnt protein]-L-serine + (9Z)-hexadecenoyl-CoA = [Wnt protein]-O-(9Z)-hexadecenoyl-L-serine + CoA. Its function is as follows. Protein-serine O-palmitoleoyltransferase that acts as a key regulator of the Wnt signaling pathway by mediating the attachment of palmitoleate, a 16-carbon monounsaturated fatty acid (C16:1(9Z)), to Wnt proteins. Serine palmitoleoylation of WNT proteins is required for efficient binding to frizzled receptors. This Anopheles gambiae (African malaria mosquito) protein is Protein-serine O-palmitoleoyltransferase porcupine.